The sequence spans 578 residues: Proline--tRNA ligase (578 aa).

Belongs to the class-II aminoacyl-tRNA synthetase family. ProS type 1 subfamily. As to quaternary structure, homodimer.

The protein localises to the cytoplasm. The catalysed reaction is tRNA(Pro) + L-proline + ATP = L-prolyl-tRNA(Pro) + AMP + diphosphate. Catalyzes the attachment of proline to tRNA(Pro) in a two-step reaction: proline is first activated by ATP to form Pro-AMP and then transferred to the acceptor end of tRNA(Pro). As ProRS can inadvertently accommodate and process non-cognate amino acids such as alanine and cysteine, to avoid such errors it has two additional distinct editing activities against alanine. One activity is designated as 'pretransfer' editing and involves the tRNA(Pro)-independent hydrolysis of activated Ala-AMP. The other activity is designated 'posttransfer' editing and involves deacylation of mischarged Ala-tRNA(Pro). The misacylated Cys-tRNA(Pro) is not edited by ProRS. The polypeptide is Proline--tRNA ligase (Burkholderia multivorans (strain ATCC 17616 / 249)).